A 115-amino-acid polypeptide reads, in one-letter code: Parathyroid hormone (115 aa).

The first 25 residues, 1–25 (MMSASTMAKVMILMLAVCLLTQADG), serve as a signal peptide directing secretion. Residues 26 to 31 (KPVKKR) constitute a propeptide that is removed on maturation. The interval 51–69 (RMQWLRKKLQDVHNFVSLG) is important for receptor binding. The tract at residues 76-101 (EGSYQRPTKKEENVLVDGNSKSLGEG) is disordered.

This sequence belongs to the parathyroid hormone family. Interacts with PTH1R (via N-terminal extracellular domain). Hypothalamus and parathyroid gland.

It is found in the secreted. Parathyroid hormone elevates calcium level by dissolving the salts in bone and preventing their renal excretion. Acts by binding to its receptor, PTH1R, activating G protein-coupled receptor signaling. Stimulates [1-14C]-2-deoxy-D-glucose (2DG) transport and glycogen synthesis in osteoblastic cells. In Rattus norvegicus (Rat), this protein is Parathyroid hormone (Pth).